The following is a 363-amino-acid chain: Inositol-3-phosphate synthase (363 aa).

Residue Lys-65 forms an Isoglutamyl lysine isopeptide (Lys-Gln) (interchain with Q-Cter in protein Pup) linkage. NAD(+) is bound by residues Asp-70, Ala-129, Tyr-149, Ser-192, Asp-227, and Lys-240.

It belongs to the myo-inositol 1-phosphate synthase family. NAD(+) serves as cofactor. In terms of processing, pupylated at Lys-65 by the prokaryotic ubiquitin-like protein Pup, which leads to its degradation by the proteasome.

The catalysed reaction is D-glucose 6-phosphate = 1D-myo-inositol 3-phosphate. In terms of biological role, key enzyme in myo-inositol biosynthesis pathway that catalyzes the conversion of glucose 6-phosphate to 1D-myo-inositol 3-phosphate in a NAD-dependent manner. This chain is Inositol-3-phosphate synthase (ino1), found in Mycolicibacterium smegmatis (strain ATCC 700084 / mc(2)155) (Mycobacterium smegmatis).